The following is a 229-amino-acid chain: GTP cyclohydrolase 1 (229 aa).

Residues 1–21 form a disordered region; the sequence is MDAKIKPLRAGKSADARTDFQ. Zn(2+) contacts are provided by cysteine 118, histidine 121, and cysteine 189.

The protein belongs to the GTP cyclohydrolase I family. As to quaternary structure, toroid-shaped homodecamer, composed of two pentamers of five dimers.

The enzyme catalyses GTP + H2O = 7,8-dihydroneopterin 3'-triphosphate + formate + H(+). The protein operates within cofactor biosynthesis; 7,8-dihydroneopterin triphosphate biosynthesis; 7,8-dihydroneopterin triphosphate from GTP: step 1/1. This Rhodopseudomonas palustris (strain HaA2) protein is GTP cyclohydrolase 1.